The chain runs to 418 residues: Multidrug resistance protein MdtG (418 aa).

The next 11 membrane-spanning stretches (helical) occupy residues 19-39 (IGCFLTGAAFSLVMPFLPLYV), 56-76 (LVFSITFLFSAIASPFWGGLA), 90-110 (LGMAIVMLLMGLAQNIWQFLI), 113-133 (ALLGLLGGFIPNANALIATQI), 144-164 (TLSTGGVSGALLGPLVGGVLA), 171-191 (PVFFMTASVLFLCFLLTLLFI), 222-242 (LFVTTLIIQVATGSIAPILTL), 251-271 (VANIAFISGMIASVPGVAALI), 288-308 (ILIAALVISVLLLIPMSFVQT), 317-337 (FLLGAADGALLPAVQTLLVYN), and 376-396 (AVFLVTAMVVLFNAVYTGLSL).

The protein belongs to the major facilitator superfamily. DHA1 family. MdtG (TC 2.A.1.2.20) subfamily.

It is found in the cell inner membrane. This is Multidrug resistance protein MdtG from Enterobacter lignolyticus (strain SCF1).